Here is a 488-residue protein sequence, read N- to C-terminus: Glutamyl-tRNA(Gln) amidotransferase subunit A (488 aa).

Catalysis depends on charge relay system residues Lys77 and Ser152. Catalysis depends on Ser176, which acts as the Acyl-ester intermediate.

It belongs to the amidase family. GatA subfamily. As to quaternary structure, heterotrimer of A, B and C subunits.

It carries out the reaction L-glutamyl-tRNA(Gln) + L-glutamine + ATP + H2O = L-glutaminyl-tRNA(Gln) + L-glutamate + ADP + phosphate + H(+). Functionally, allows the formation of correctly charged Gln-tRNA(Gln) through the transamidation of misacylated Glu-tRNA(Gln) in organisms which lack glutaminyl-tRNA synthetase. The reaction takes place in the presence of glutamine and ATP through an activated gamma-phospho-Glu-tRNA(Gln). In Streptococcus pyogenes serotype M12 (strain MGAS2096), this protein is Glutamyl-tRNA(Gln) amidotransferase subunit A.